A 362-amino-acid chain; its full sequence is 3-isopropylmalate dehydrogenase (362 aa).

Positions 97, 107, 135, and 225 each coordinate substrate. 3 residues coordinate Mg(2+): D225, D249, and D253. G283 to N295 lines the NAD(+) pocket.

The protein belongs to the isocitrate and isopropylmalate dehydrogenases family. LeuB type 1 subfamily. Homodimer. The cofactor is Mg(2+). Mn(2+) serves as cofactor.

Its subcellular location is the cytoplasm. It carries out the reaction (2R,3S)-3-isopropylmalate + NAD(+) = 4-methyl-2-oxopentanoate + CO2 + NADH. Its pathway is amino-acid biosynthesis; L-leucine biosynthesis; L-leucine from 3-methyl-2-oxobutanoate: step 3/4. Catalyzes the oxidation of 3-carboxy-2-hydroxy-4-methylpentanoate (3-isopropylmalate) to 3-carboxy-4-methyl-2-oxopentanoate. The product decarboxylates to 4-methyl-2 oxopentanoate. This chain is 3-isopropylmalate dehydrogenase, found in Prochlorococcus marinus (strain SARG / CCMP1375 / SS120).